We begin with the raw amino-acid sequence, 143 residues long: Transcriptional regulator MraZ (143 aa).

2 consecutive SpoVT-AbrB domains span residues 5 to 47 (EYEH…PRGV) and 76 to 119 (AADM…SPRR).

This sequence belongs to the MraZ family. Forms oligomers.

It localises to the cytoplasm. Its subcellular location is the nucleoid. The sequence is that of Transcriptional regulator MraZ from Roseiflexus castenholzii (strain DSM 13941 / HLO8).